Consider the following 202-residue polypeptide: Ribosome maturation factor RimP (202 aa).

Belongs to the RimP family.

The protein localises to the cytoplasm. Its function is as follows. Required for maturation of 30S ribosomal subunits. This Polaromonas naphthalenivorans (strain CJ2) protein is Ribosome maturation factor RimP.